The following is a 692-amino-acid chain: Elongation factor G (692 aa).

A tr-type G domain is found at 8 to 282 (EKTRNIGIMA…AVIDYLPSPL (275 aa)). GTP-binding positions include 17–24 (AHVDAGKT), 81–85 (DTPGH), and 135–138 (NKMD).

Belongs to the TRAFAC class translation factor GTPase superfamily. Classic translation factor GTPase family. EF-G/EF-2 subfamily.

It localises to the cytoplasm. Catalyzes the GTP-dependent ribosomal translocation step during translation elongation. During this step, the ribosome changes from the pre-translocational (PRE) to the post-translocational (POST) state as the newly formed A-site-bound peptidyl-tRNA and P-site-bound deacylated tRNA move to the P and E sites, respectively. Catalyzes the coordinated movement of the two tRNA molecules, the mRNA and conformational changes in the ribosome. In Streptococcus agalactiae serotype Ia (strain ATCC 27591 / A909 / CDC SS700), this protein is Elongation factor G.